We begin with the raw amino-acid sequence, 547 residues long: Chaperonin GroEL (547 aa).

ATP-binding positions include 30–33 (TLGP), Lys-51, 87–91 (DGTTT), Gly-415, and Asp-496.

It belongs to the chaperonin (HSP60) family. Forms a cylinder of 14 subunits composed of two heptameric rings stacked back-to-back. Interacts with the co-chaperonin GroES.

The protein resides in the cytoplasm. It catalyses the reaction ATP + H2O + a folded polypeptide = ADP + phosphate + an unfolded polypeptide.. Functionally, together with its co-chaperonin GroES, plays an essential role in assisting protein folding. The GroEL-GroES system forms a nano-cage that allows encapsulation of the non-native substrate proteins and provides a physical environment optimized to promote and accelerate protein folding. This is Chaperonin GroEL from Actinobacillus succinogenes (strain ATCC 55618 / DSM 22257 / CCUG 43843 / 130Z).